The following is a 161-amino-acid chain: 6,7-dimethyl-8-ribityllumazine synthase (161 aa).

Residues W31, 65–67, and 89–91 contribute to the 5-amino-6-(D-ribitylamino)uracil site; these read TFE and CVV. 94 to 95 contacts (2S)-2-hydroxy-3-oxobutyl phosphate; sequence DT. Catalysis depends on H97, which acts as the Proton donor. 5-amino-6-(D-ribitylamino)uracil is bound at residue F122. R136 is a (2S)-2-hydroxy-3-oxobutyl phosphate binding site.

It belongs to the DMRL synthase family.

The enzyme catalyses (2S)-2-hydroxy-3-oxobutyl phosphate + 5-amino-6-(D-ribitylamino)uracil = 6,7-dimethyl-8-(1-D-ribityl)lumazine + phosphate + 2 H2O + H(+). Its pathway is cofactor biosynthesis; riboflavin biosynthesis; riboflavin from 2-hydroxy-3-oxobutyl phosphate and 5-amino-6-(D-ribitylamino)uracil: step 1/2. Catalyzes the formation of 6,7-dimethyl-8-ribityllumazine by condensation of 5-amino-6-(D-ribitylamino)uracil with 3,4-dihydroxy-2-butanone 4-phosphate. This is the penultimate step in the biosynthesis of riboflavin. The protein is 6,7-dimethyl-8-ribityllumazine synthase of Porphyromonas gingivalis (strain ATCC 33277 / DSM 20709 / CIP 103683 / JCM 12257 / NCTC 11834 / 2561).